A 511-amino-acid polypeptide reads, in one-letter code: Archaeal glutamate synthase [NADPH] (511 aa).

4Fe-4S ferredoxin-type domains are found at residues 15–44 (FMIERRQDRCIRCRVCERQCGFNVHWYDEE) and 46–75 (DMMREDEMKCVGCQRCAVMCPTNALVVKPH). 8 residues coordinate [4Fe-4S] cluster: cysteine 24, cysteine 27, cysteine 30, cysteine 34, cysteine 55, cysteine 58, cysteine 61, and cysteine 65.

The protein belongs to the glutamate synthase family. It depends on FMN as a cofactor.

It catalyses the reaction 2 L-glutamate + NADP(+) = L-glutamine + 2-oxoglutarate + NADPH + H(+). In Archaeoglobus fulgidus (strain ATCC 49558 / DSM 4304 / JCM 9628 / NBRC 100126 / VC-16), this protein is Archaeal glutamate synthase [NADPH].